Consider the following 144-residue polypeptide: Large ribosomal subunit protein uL11 (144 aa).

This sequence belongs to the universal ribosomal protein uL11 family. As to quaternary structure, part of the ribosomal stalk of the 50S ribosomal subunit. Interacts with L10 and the large rRNA to form the base of the stalk. L10 forms an elongated spine to which L12 dimers bind in a sequential fashion forming a multimeric L10(L12)X complex. One or more lysine residues are methylated.

In terms of biological role, forms part of the ribosomal stalk which helps the ribosome interact with GTP-bound translation factors. The protein is Large ribosomal subunit protein uL11 of Neisseria meningitidis serogroup C (strain 053442).